We begin with the raw amino-acid sequence, 901 residues long: Bifunctional protein STORR (901 aa).

A helical transmembrane segment spans residues 12 to 32; the sequence is TSSVVALLLALVSILSSVVVL. Cysteine 513 lines the heme pocket.

The protein in the N-terminal section; belongs to the cytochrome P450 family. It in the C-terminal section; belongs to the aldo/keto reductase family. Heme serves as cofactor.

The protein localises to the membrane. The catalysed reaction is (R)-reticuline + NADP(+) = 1,2-dehydroreticuline + NADPH + H(+). The enzyme catalyses (S)-reticuline + reduced [NADPH--hemoprotein reductase] + O2 = 1,2-dehydroreticuline + oxidized [NADPH--hemoprotein reductase] + 2 H2O + H(+). It functions in the pathway alkaloid biosynthesis; morphine biosynthesis. In terms of biological role, bifunctional protein involved in the biosynthesis of morphinan-type benzylisoquinoline alkaloids. Required for the isomerization of (S)- to (R)-reticuline. The cytochrome P450 module is responsible for the conversion of (S)-reticuline to 1,2-dehydroreticuline while the oxidoreductase module converts 1,2-dehydroreticuline to (R)-reticuline. This is Bifunctional protein STORR from Papaver somniferum (Opium poppy).